A 534-amino-acid polypeptide reads, in one-letter code: NAD(P)H-quinone oxidoreductase chain 4 2 (534 aa).

13 helical membrane passes run 6–26 (FPWL…IPLL), 38–58 (WYSL…FWTS), 93–113 (LILL…PVTF), 117–137 (FFYF…AVQD), 138–158 (LLVF…LLAI), 171–191 (FILY…AMAF), 210–230 (IGFQ…KLPI), 245–265 (TAPV…YALF), 279–299 (FAPI…LTSF), 313–333 (ISHM…GLSG), 335–355 (MLQM…VGAT), 377–399 (MFAM…GFVA), and 419–439 (VVVI…LLSM).

It belongs to the complex I subunit 4 family.

It localises to the cellular thylakoid membrane. The catalysed reaction is a plastoquinone + NADH + (n+1) H(+)(in) = a plastoquinol + NAD(+) + n H(+)(out). It carries out the reaction a plastoquinone + NADPH + (n+1) H(+)(in) = a plastoquinol + NADP(+) + n H(+)(out). Functionally, NDH-1 shuttles electrons from NAD(P)H, via FMN and iron-sulfur (Fe-S) centers, to quinones in the respiratory chain. The immediate electron acceptor for the enzyme in this species is believed to be plastoquinone. Couples the redox reaction to proton translocation (for every two electrons transferred, four hydrogen ions are translocated across the cytoplasmic membrane), and thus conserves the redox energy in a proton gradient. This is NAD(P)H-quinone oxidoreductase chain 4 2 from Synechococcus elongatus (strain ATCC 33912 / PCC 7942 / FACHB-805) (Anacystis nidulans R2).